A 205-amino-acid polypeptide reads, in one-letter code: GTP cyclohydrolase 1 (205 aa).

Positions 95, 98, and 166 each coordinate Zn(2+).

This sequence belongs to the GTP cyclohydrolase I family. Toroid-shaped homodecamer, composed of two pentamers of five dimers.

It carries out the reaction GTP + H2O = 7,8-dihydroneopterin 3'-triphosphate + formate + H(+). It participates in cofactor biosynthesis; 7,8-dihydroneopterin triphosphate biosynthesis; 7,8-dihydroneopterin triphosphate from GTP: step 1/1. The sequence is that of GTP cyclohydrolase 1 from Maricaulis maris (strain MCS10) (Caulobacter maris).